Reading from the N-terminus, the 266-residue chain is UPF0354 protein lin1649 (266 aa).

Belongs to the UPF0354 family.

The polypeptide is UPF0354 protein lin1649 (Listeria innocua serovar 6a (strain ATCC BAA-680 / CLIP 11262)).